Here is a 257-residue protein sequence, read N- to C-terminus: Acetylglutamate kinase (257 aa).

Substrate is bound by residues G41 to G42, R63, and N155.

Belongs to the acetylglutamate kinase family. ArgB subfamily.

The protein resides in the cytoplasm. The enzyme catalyses N-acetyl-L-glutamate + ATP = N-acetyl-L-glutamyl 5-phosphate + ADP. The protein operates within amino-acid biosynthesis; L-arginine biosynthesis; N(2)-acetyl-L-ornithine from L-glutamate: step 2/4. In terms of biological role, catalyzes the ATP-dependent phosphorylation of N-acetyl-L-glutamate. This chain is Acetylglutamate kinase, found in Solibacter usitatus (strain Ellin6076).